Here is a 224-residue protein sequence, read N- to C-terminus: Thymidylate kinase (224 aa).

7-14 (GIEGSGKS) lines the ATP pocket.

This sequence belongs to the thymidylate kinase family.

It carries out the reaction dTMP + ATP = dTDP + ADP. In terms of biological role, phosphorylation of dTMP to form dTDP in both de novo and salvage pathways of dTTP synthesis. The protein is Thymidylate kinase of Nitratidesulfovibrio vulgaris (strain DP4) (Desulfovibrio vulgaris).